The chain runs to 202 residues: Recombination protein RecR (202 aa).

The segment at 57–72 (CRDCRTFTEDDICAVC) adopts a C4-type zinc-finger fold. In terms of domain architecture, Toprim spans 81–176 (GQICVVESPA…PATRIAHGVP (96 aa)).

Belongs to the RecR family.

Its function is as follows. May play a role in DNA repair. It seems to be involved in an RecBC-independent recombinational process of DNA repair. It may act with RecF and RecO. The protein is Recombination protein RecR of Photobacterium profundum (strain SS9).